Here is a 246-residue protein sequence, read N- to C-terminus: Bis(5'-nucleosyl)-tetraphosphatase PrpE [asymmetrical] (246 aa).

The protein belongs to the PrpE family. Requires Ni(2+) as cofactor.

It catalyses the reaction P(1),P(4)-bis(5'-guanosyl) tetraphosphate + H2O = GMP + GTP + 2 H(+). Asymmetrically hydrolyzes Ap4p to yield AMP and ATP. This chain is Bis(5'-nucleosyl)-tetraphosphatase PrpE [asymmetrical], found in Bacillus cereus (strain ATCC 14579 / DSM 31 / CCUG 7414 / JCM 2152 / NBRC 15305 / NCIMB 9373 / NCTC 2599 / NRRL B-3711).